Consider the following 282-residue polypeptide: Complement component 1 Q subcomponent-binding protein, mitochondrial (282 aa).

The transit peptide at 1 to 73 (MLPLLRCVPR…PCACGCGCGS (73 aa)) directs the protein to the mitochondrion. The C1q binding stretch occupies residues 76–93 (TDGDKAFVDFLSDEIKEE). A Phosphoserine modification is found at serine 87. Position 91 is an N6-acetyllysine (lysine 91). Residues 138-164 (SIPPTFDGEEEPSQGQKVEEQEPELTS) are disordered. The interaction with MAVS stretch occupies residues 168–213 (FVVEVIKNDDGKKALVLDCHYPEDEVGQEDEAESDIFSIREVSFQS). Residue tyrosine 188 is modified to Phosphotyrosine. Phosphoserine is present on residues serine 201 and serine 205. At threonine 214 the chain carries Phosphothreonine.

This sequence belongs to the MAM33 family. As to quaternary structure, homotrimer; three monomers form a donut-shaped structure with an unusually asymmetric charge distribution on the surface. Interacts with CDK13, HRK, VTN, NFYB, ADRA1B, FOXC1, DDX21, DDX50, NCL, SRSF1, SRSF9 and CDKN2A isoform smARF. Interacts with CD93; the association may represent a cell surface C1q receptor. Interacts with KRT1; the association represents a cell surface kininogen receptor. Interacts with CD209; the interaction is indicative for a C1q:C1QBP:CD209 signaling complex. Interacts with FBL and RRP1; the respective interactions with C1QBP are competitive. Probably associates with the mitoribosome. Interacts with MAVS; the interaction occurs upon viral transfection. Interacts with PPIF. Interacts with U2AF1L4. Interacts with PLEKHN1. Interacts with VGF-derived peptide TLQP-21. Interacts with POLGARF which is produced from an alternative reading frame of the POLG gene; the interaction results in nucleolar localization of C1QBP, probably due to prevention of C1QBP maturation and redirection from mitochondria to nucleoli. Interacts with MRE11 and RAD50; forming the MRC (MRE11-RAD50-C1QBP) complex that inhibits the activity of MRE11. (Microbial infection) Interacts with Rubella virus capsid protein; the interaction occurs in mitochondria. Interacts with Rubella virus protease/methyltransferase p150. In terms of assembly, (Microbial infection) Interacts with Staphylococcus aureus protein A/spa. As to quaternary structure, (Microbial infection) Interacts with Staphylococcus aureus protein A/spa, HIV-1 Tat and HCV core protein. (Microbial infection) Interacts with HIV-1 Tat and HCV core protein. In terms of assembly, (Microbial infection) Interacts with L.monocytogenes internalin B. As to quaternary structure, (Microbial infection) Interacts with Epstein-Barr virus EBNA1. In terms of tissue distribution, expressed on cell surface of peripheral blood cells (at protein level); Surface expression is reported for macrophages and monocyte-derived dendritic cells.

The protein resides in the mitochondrion matrix. It localises to the nucleus. It is found in the nucleolus. The protein localises to the cell membrane. Its subcellular location is the secreted. The protein resides in the cytoplasm. In terms of biological role, multifunctional and multicompartmental protein involved in inflammation and infection processes, ribosome biogenesis, protein synthesis in mitochondria, regulation of apoptosis, transcriptional regulation and pre-mRNA splicing. At the cell surface is thought to act as an endothelial receptor for plasma proteins of the complement and kallikrein-kinin cascades. Putative receptor for C1q; specifically binds to the globular 'heads' of C1q thus inhibiting C1; may perform the receptor function through a complex with C1qR/CD93. In complex with cytokeratin-1/KRT1 is a high affinity receptor for kininogen-1/HMWK. Can also bind other plasma proteins, such as coagulation factor XII leading to its autoactivation. May function to bind initially fluid kininogen-1 to the cell membrane. The secreted form may enhance both extrinsic and intrinsic coagulation pathways. It is postulated that the cell surface form requires docking with transmembrane proteins for downstream signaling which might be specific for a cell-type or response. By acting as C1q receptor is involved in chemotaxis of immature dendritic cells and neutrophils and is proposed to signal through CD209/DC-SIGN on immature dendritic cells, through integrin alpha-4/beta-1 during trophoblast invasion of the decidua, and through integrin beta-1 during endothelial cell adhesion and spreading. Signaling involved in inhibition of innate immune response is implicating the PI3K-AKT/PKB pathway. Required for protein synthesis in mitochondria. In mitochondrial translation may be involved in formation of functional 55S mitoribosomes; the function seems to involve its RNA-binding activity. Acts as a RNA modification reader, which specifically recognizes and binds mitochondrial RNAs modified by C5-methylcytosine (m5C) in response to stress, and promotes recruitment of the mitochondrial degradosome complex, leading to their degradation. May be involved in the nucleolar ribosome maturation process; the function may involve the exchange of FBL for RRP1 in the association with pre-ribosome particles. Involved in regulation of RNA splicing by inhibiting the RNA-binding capacity of SRSF1 and its phosphorylation. Is required for the nuclear translocation of splicing factor U2AF1L4. Involved in regulation of CDKN2A- and HRK-mediated apoptosis. Stabilizes mitochondrial CDKN2A isoform smARF. May be involved in regulation of FOXC1 transcriptional activity and NFY/CCAAT-binding factor complex-mediated transcription. May play a role in antibacterial defense as it can bind to cell surface hyaluronan and inhibit Streptococcus pneumoniae hyaluronate lyase. May be involved in modulation of the immune response; ligation by HCV core protein is resulting in suppression of interleukin-12 production in monocyte-derived dendritic cells. Involved in regulation of antiviral response by inhibiting RIGI- and IFIH1-mediated signaling pathways probably involving its association with MAVS after viral infection. Acts as a regulator of DNA repair via homologous recombination by inhibiting the activity of MRE11: interacts with unphosphorylated MRE11 and RAD50 in absence of DNA damage, preventing formation and activity of the MRN complex. Following DNA damage, dissociates from phosphorylated MRE11, allowing formation of the MRN complex. Functionally, (Microbial infection) Involved in HIV-1 replication, presumably by contributing to splicing of viral RNA. Its function is as follows. (Microbial infection) In infection processes acts as an attachment site for microbial proteins, including Listeria monocytogenes internalin B (InlB) and Staphylococcus aureus protein A. (Microbial infection) Involved in replication of Rubella virus. The sequence is that of Complement component 1 Q subcomponent-binding protein, mitochondrial (C1QBP) from Homo sapiens (Human).